Here is a 382-residue protein sequence, read N- to C-terminus: Calcium/calmodulin-dependent protein kinase (382 aa).

Residues 23-278 (YKFGRTLGAG…SKEALGHIWL (256 aa)) enclose the Protein kinase domain. ATP-binding positions include 29 to 37 (LGAGTYGVV) and K50. D142 (proton acceptor) is an active-site residue. The calmodulin-binding stretch occupies residues 291 to 301 (ELEAYRRRARL). Disordered regions lie at residues 318–344 (KEHE…GDGS) and 359–382 (QKQE…FSNA).

It belongs to the protein kinase superfamily. CAMK Ser/Thr protein kinase family. CaMK subfamily.

The catalysed reaction is L-seryl-[protein] + ATP = O-phospho-L-seryl-[protein] + ADP + H(+). It catalyses the reaction L-threonyl-[protein] + ATP = O-phospho-L-threonyl-[protein] + ADP + H(+). This chain is Calcium/calmodulin-dependent protein kinase, found in Metarhizium anisopliae (Entomophthora anisopliae).